A 478-amino-acid polypeptide reads, in one-letter code: Transposase for insertion sequence element IS231D (478 aa).

It belongs to the transposase 11 family.

Its function is as follows. Involved in the transposition of the insertion sequence. This is Transposase for insertion sequence element IS231D from Bacillus thuringiensis subsp. finitimus.